We begin with the raw amino-acid sequence, 495 residues long: MEFLVKSVRPETLKTATLVLAVGEGRKLGASAKAVDDATGGAIGAVLKRGDLAGKVGQTLLLQNLPNLKAERVLLVGAGKERELGDRQYRKLASAVLSTLKGLAGADAVLALGDLAVKGRDAHAKARLLVETLADGLYVFDRYKSQKAEPLKLKKLTLLADKADSAAVEQGSKEAQAIANGMALTRDLGNLPPNVCHPTFLGEQAKALAKEFKGLKVEVHDEQKLRELGMGSFLAVAQGSEQPPRLIVLQYNGAKKDQAPHVLVGKGITFDTGGISLKPGLGMDEMKFDMCGAASVFGTFRAVLELQLPINLVGLLACAENMPSGGATRPGDIVTTMSGQTVEILNTDAEGRLVLCDALTYAERFKPQSVVDIATLTGACIVALGSNTSGLMGNNEALVRQLLKAGEFADDRAWQLPLFDEYQEQLDSPFADIANIGGPKAGTITAGCFLSRFAKKYHWAHLDIAGTAWISGGKDKGATGRPVPLLTQYLLERAK.

Residues Lys-266 and Asp-271 each contribute to the Mn(2+) site. Lys-278 is a catalytic residue. Asp-289, Asp-348, and Glu-350 together coordinate Mn(2+). Arg-352 is an active-site residue.

Belongs to the peptidase M17 family. It depends on Mn(2+) as a cofactor.

Its subcellular location is the cytoplasm. It catalyses the reaction Release of an N-terminal amino acid, Xaa-|-Yaa-, in which Xaa is preferably Leu, but may be other amino acids including Pro although not Arg or Lys, and Yaa may be Pro. Amino acid amides and methyl esters are also readily hydrolyzed, but rates on arylamides are exceedingly low.. The catalysed reaction is Release of an N-terminal amino acid, preferentially leucine, but not glutamic or aspartic acids.. Functionally, presumably involved in the processing and regular turnover of intracellular proteins. Catalyzes the removal of unsubstituted N-terminal amino acids from various peptides. The protein is Probable cytosol aminopeptidase of Pseudomonas paraeruginosa (strain DSM 24068 / PA7) (Pseudomonas aeruginosa (strain PA7)).